Here is a 714-residue protein sequence, read N- to C-terminus: Polyribonucleotide nucleotidyltransferase (714 aa).

Mg(2+)-binding residues include aspartate 488 and aspartate 494. Positions 555–614 (PRIEVMNIPTDKIRDVIGSGGKVIREIVEKTGAKINIEDDGTVKIASSNGKEIEAAKKWI) constitute a KH domain. Residues 624 to 692 (GEIYEGTVVK…ERGKVRLSMK (69 aa)) enclose the S1 motif domain.

It belongs to the polyribonucleotide nucleotidyltransferase family. Mg(2+) is required as a cofactor.

The protein localises to the cytoplasm. The enzyme catalyses RNA(n+1) + phosphate = RNA(n) + a ribonucleoside 5'-diphosphate. Functionally, involved in mRNA degradation. Catalyzes the phosphorolysis of single-stranded polyribonucleotides processively in the 3'- to 5'-direction. This Brucella suis biovar 1 (strain 1330) protein is Polyribonucleotide nucleotidyltransferase.